We begin with the raw amino-acid sequence, 494 residues long: Probable cytochrome P450 515A1 (494 aa).

Residues M1–F21 traverse the membrane as a helical segment. C440 contacts heme.

Belongs to the cytochrome P450 family. Requires heme as cofactor.

The protein resides in the membrane. The polypeptide is Probable cytochrome P450 515A1 (cyp515A1) (Dictyostelium discoideum (Social amoeba)).